The following is a 39-amino-acid chain: Alpha-conotoxin ArIA (39 aa).

Residues 1-17 (SDGRNVAAKAFHRIGRT) constitute a propeptide that is removed on maturation. Intrachain disulfides connect Cys-22-Cys-28 and Cys-23-Cys-36. The ser-Xaa-Pro motif, crucial for potent interaction with nAChR stretch occupies residues 24-26 (SNP). Residue Pro-33 is modified to 4-hydroxyproline; in ArIA.

This sequence belongs to the conotoxin A superfamily. As to expression, expressed by the venom duct.

It is found in the secreted. In terms of biological role, alpha-conotoxins act on postsynaptic membranes, they bind to the nicotinic acetylcholine receptors (nAChR) and thus inhibit them. This toxin acts as a competitive inhibitor and is 3-fold more potent on alpha-7/CHRNA7 nAChRs (IC(50)=6 nM) than on alpha-3-beta-2/CHRNA3-CHRNB2 nAChR (IC(50)=18 nM). Functionally, acts as a competitive inhibitor and is 33-fold more potent on alpha-7/CHRNA7 nAChRs (IC(50)=1.8 nM) than on alpha-3-beta-2/CHRNA3-CHRNB2 nAChR (IC(50)=60.1 nM). In Conus arenatus (Sand-dusted cone), this protein is Alpha-conotoxin ArIA.